The following is a 254-amino-acid chain: Small ribosomal subunit protein uS2 (254 aa).

The protein belongs to the universal ribosomal protein uS2 family.

The sequence is that of Small ribosomal subunit protein uS2 from Legionella pneumophila (strain Corby).